Here is a 287-residue protein sequence, read N- to C-terminus: Phosphatidylserine decarboxylase proenzyme (287 aa).

Residues D89, H146, and S252 each act as charge relay system; for autoendoproteolytic cleavage activity in the active site. S252 (schiff-base intermediate with substrate; via pyruvic acid; for decarboxylase activity) is an active-site residue. S252 is subject to Pyruvic acid (Ser); by autocatalysis.

Belongs to the phosphatidylserine decarboxylase family. PSD-B subfamily. Prokaryotic type I sub-subfamily. Heterodimer of a large membrane-associated beta subunit and a small pyruvoyl-containing alpha subunit. It depends on pyruvate as a cofactor. In terms of processing, is synthesized initially as an inactive proenzyme. Formation of the active enzyme involves a self-maturation process in which the active site pyruvoyl group is generated from an internal serine residue via an autocatalytic post-translational modification. Two non-identical subunits are generated from the proenzyme in this reaction, and the pyruvate is formed at the N-terminus of the alpha chain, which is derived from the carboxyl end of the proenzyme. The autoendoproteolytic cleavage occurs by a canonical serine protease mechanism, in which the side chain hydroxyl group of the serine supplies its oxygen atom to form the C-terminus of the beta chain, while the remainder of the serine residue undergoes an oxidative deamination to produce ammonia and the pyruvoyl prosthetic group on the alpha chain. During this reaction, the Ser that is part of the protease active site of the proenzyme becomes the pyruvoyl prosthetic group, which constitutes an essential element of the active site of the mature decarboxylase.

Its subcellular location is the cell membrane. The enzyme catalyses a 1,2-diacyl-sn-glycero-3-phospho-L-serine + H(+) = a 1,2-diacyl-sn-glycero-3-phosphoethanolamine + CO2. The protein operates within phospholipid metabolism; phosphatidylethanolamine biosynthesis; phosphatidylethanolamine from CDP-diacylglycerol: step 2/2. Its function is as follows. Catalyzes the formation of phosphatidylethanolamine (PtdEtn) from phosphatidylserine (PtdSer). In Shewanella halifaxensis (strain HAW-EB4), this protein is Phosphatidylserine decarboxylase proenzyme.